The sequence spans 48 residues: Fimbrial assembly protein, serogroup E2 (48 aa).

This chain is Fimbrial assembly protein, serogroup E2 (fimB), found in Dichelobacter nodosus (Bacteroides nodosus).